A 334-amino-acid polypeptide reads, in one-letter code: Anthranilate phosphoribosyltransferase (334 aa).

5-phospho-alpha-D-ribose 1-diphosphate is bound by residues Gly-79, 82-83 (GD), Ser-87, 89-92 (NIST), 107-115 (KAGNRSISS), and Ser-119. Gly-79 is an anthranilate binding site. Ser-91 is a Mg(2+) binding site. Position 110 (Asn-110) interacts with anthranilate. An anthranilate-binding site is contributed by Arg-165. Residues Asp-224 and Glu-225 each contribute to the Mg(2+) site.

This sequence belongs to the anthranilate phosphoribosyltransferase family. In terms of assembly, homodimer. Mg(2+) is required as a cofactor.

It carries out the reaction N-(5-phospho-beta-D-ribosyl)anthranilate + diphosphate = 5-phospho-alpha-D-ribose 1-diphosphate + anthranilate. Its pathway is amino-acid biosynthesis; L-tryptophan biosynthesis; L-tryptophan from chorismate: step 2/5. Its function is as follows. Catalyzes the transfer of the phosphoribosyl group of 5-phosphorylribose-1-pyrophosphate (PRPP) to anthranilate to yield N-(5'-phosphoribosyl)-anthranilate (PRA). The polypeptide is Anthranilate phosphoribosyltransferase (Streptococcus thermophilus (strain ATCC BAA-491 / LMD-9)).